The following is a 253-amino-acid chain: Trans-aconitate 2-methyltransferase (253 aa).

This sequence belongs to the methyltransferase superfamily. Tam family.

The protein resides in the cytoplasm. The catalysed reaction is trans-aconitate + S-adenosyl-L-methionine = (E)-3-(methoxycarbonyl)pent-2-enedioate + S-adenosyl-L-homocysteine. In terms of biological role, catalyzes the S-adenosylmethionine monomethyl esterification of trans-aconitate. The chain is Trans-aconitate 2-methyltransferase from Azoarcus sp. (strain BH72).